The sequence spans 841 residues: Protein translocase subunit SecA (841 aa).

Residues Q85, 103–107 (GEGKT), and D492 each bind ATP. The tract at residues 788–841 (EVVQGQTTAHQPQEGDEEKTVKKKPVRKVVDIGRNSPCHCGSGKKYKNCHGKTE) is disordered. Zn(2+) is bound by residues C825, C827, C836, and H837. A compositionally biased stretch (basic residues) spans 829–841 (SGKKYKNCHGKTE).

The protein belongs to the SecA family. In terms of assembly, monomer and homodimer. Part of the essential Sec protein translocation apparatus which comprises SecA, SecYEG and auxiliary proteins SecDF. Other proteins may also be involved. Requires Zn(2+) as cofactor.

It is found in the cell membrane. Its subcellular location is the cytoplasm. It carries out the reaction ATP + H2O + cellular proteinSide 1 = ADP + phosphate + cellular proteinSide 2.. Its function is as follows. Part of the Sec protein translocase complex. Interacts with the SecYEG preprotein conducting channel. Has a central role in coupling the hydrolysis of ATP to the transfer of proteins into and across the cell membrane, serving as an ATP-driven molecular motor driving the stepwise translocation of polypeptide chains across the membrane. This Bacillus pumilus (strain SAFR-032) protein is Protein translocase subunit SecA.